Reading from the N-terminus, the 747-residue chain is Rho GTPase-activating protein 24 (747 aa).

Disordered stretches follow at residues 1–20 (MEER…KNTK) and 327–475 (FPKD…GTHS). Residues 17–123 (KNTKCGWLRK…WVKSIRRVIW (107 aa)) enclose the PH domain. The Rho-GAP domain maps to 133–327 (QKLEDTVRYE…VMISKHDRLF (195 aa)). Polar residues-rich tracts occupy residues 334–346 (QSKP…SNNN) and 355–367 (GQLQ…NTKE). A phosphoserine mark is found at serine 368, serine 390, serine 395, serine 397, serine 401, serine 412, serine 414, and serine 436. Basic and acidic residues predominate over residues 368-380 (SPVRRCSWDKPES). Residues 381-404 (PQRSSVDNGSPTALSGSKTNSPRN) show a composition bias toward polar residues. A compositionally biased stretch (polar residues) spans 431–475 (IVTNGSFSSSNAEGVEKPQTTPNGSLQARRTSSLKSSGTKMGTHS). Phosphothreonine is present on threonine 451. Serine 494 is subject to Phosphoserine. The segment at 581–639 (DFYVGNFEDPVLDGPPQDDLSHPGDYENKSDRRSVGGRSSRATSSSDNSETFVGNTSSN) is disordered. Positions 599–614 (DLSHPGDYENKSDRRS) are enriched in basic and acidic residues. Positions 616–629 (GGRSSRATSSSDNS) are enriched in low complexity. The span at 630–639 (ETFVGNTSSN) shows a compositional bias: polar residues. Residues 648–728 (SSLKQEMTKQ…KEMEQFFSTF (81 aa)) are a coiled coil.

As to quaternary structure, interacts with FLNA. Post-translationally, phosphorylated by ROCK, leading to activate the RacGAP activity.

It is found in the cytoplasm. The protein localises to the cytoskeleton. It localises to the cell junction. Its subcellular location is the adherens junction. The protein resides in the focal adhesion. It is found in the cell projection. Rho GTPase-activating protein involved in cell polarity, cell morphology and cytoskeletal organization. Acts as a GTPase activator for the Rac-type GTPase by converting it to an inactive GDP-bound state. Controls actin remodeling by inactivating Rac downstream of Rho leading to suppress leading edge protrusion and promotes cell retraction to achieve cellular polarity. Able to suppress RAC1 and CDC42 activity in vitro. Overexpression induces cell rounding with partial or complete disruption of actin stress fibers and formation of membrane ruffles, lamellipodia, and filopodia. Isoform 2 is a vascular cell-specific GAP involved in modulation of angiogenesis. The chain is Rho GTPase-activating protein 24 (Arhgap24) from Mus musculus (Mouse).